We begin with the raw amino-acid sequence, 201 residues long: Holliday junction branch migration complex subunit RuvA (201 aa).

The tract at residues M1–S65 is domain I. Positions G66–G143 are domain II. The tract at residues G143–G147 is flexible linker. The interval V148–R201 is domain III.

This sequence belongs to the RuvA family. In terms of assembly, homotetramer. Forms an RuvA(8)-RuvB(12)-Holliday junction (HJ) complex. HJ DNA is sandwiched between 2 RuvA tetramers; dsDNA enters through RuvA and exits via RuvB. An RuvB hexamer assembles on each DNA strand where it exits the tetramer. Each RuvB hexamer is contacted by two RuvA subunits (via domain III) on 2 adjacent RuvB subunits; this complex drives branch migration. In the full resolvosome a probable DNA-RuvA(4)-RuvB(12)-RuvC(2) complex forms which resolves the HJ.

It is found in the cytoplasm. In terms of biological role, the RuvA-RuvB-RuvC complex processes Holliday junction (HJ) DNA during genetic recombination and DNA repair, while the RuvA-RuvB complex plays an important role in the rescue of blocked DNA replication forks via replication fork reversal (RFR). RuvA specifically binds to HJ cruciform DNA, conferring on it an open structure. The RuvB hexamer acts as an ATP-dependent pump, pulling dsDNA into and through the RuvAB complex. HJ branch migration allows RuvC to scan DNA until it finds its consensus sequence, where it cleaves and resolves the cruciform DNA. The polypeptide is Holliday junction branch migration complex subunit RuvA (Oleidesulfovibrio alaskensis (strain ATCC BAA-1058 / DSM 17464 / G20) (Desulfovibrio alaskensis)).